Reading from the N-terminus, the 455-residue chain is Ammonium transporter Rh type B (455 aa).

The Cytoplasmic segment spans residues 1-10 (MARVPRHRRL). The chain crosses the membrane as a helical span at residues 11–31 (VLPLLCLLFQGATALLFAIFV). Topologically, residues 32 to 58 (RYNHETDAALWHWGNHSNVDNEFYFRY) are extracellular. N46 carries N-linked (GlcNAc...) asparagine glycosylation. A helical membrane pass occupies residues 59-79 (PSFQDVHVMVFVGFGFLMVFL). The Cytoplasmic segment spans residues 80 to 83 (QRYG). A helical transmembrane segment spans residues 84–104 (FSSVGFTFLVASLTLQWATLL). The Extracellular portion of the chain corresponds to 105–121 (QGFLHSFHGGHIHVGVE). A helical transmembrane segment spans residues 122 to 142 (SLINADFCAGAVLISFGAVLG). The Cytoplasmic segment spans residues 143–146 (KTGP). A helical transmembrane segment spans residues 147 to 167 (AQLLLMALLEAVLFSVNEFIL). The Extracellular segment spans residues 168–175 (LSLLGVRD). Residues 176–198 (AGGSMTIHTFGAYFGLFLSWVLY) form a helical membrane-spanning segment. Residues 199–216 (RSQLEKSRHRQSSVYNSD) lie on the Cytoplasmic side of the membrane. Residues 217-237 (LFAMIGTIFLWVFWPSFNSAP) form a helical membrane-spanning segment. At 238-248 (TALGDGQHRTV) the chain is on the extracellular side. The helical transmembrane segment at 249–269 (VNTYYSLTASTLSTFALSALV) threads the bilayer. Residues 270 to 279 (SGDGRLDMVH) are Cytoplasmic-facing. Residues 280 to 300 (VQNAALAGGVVVGTSSEMMLT) form a helical membrane-spanning segment. Residue P301 is a topological domain, extracellular. Residues 302–322 (FGALAAGFLAGTVSTLGYKFF) traverse the membrane as a helical segment. Over 323 to 343 (TPILESRFKLQDTCGVHNLHG) the chain is Cytoplasmic. The helical transmembrane segment at 344 to 364 (MPGVLGAILGVVVAALATHEA) threads the bilayer. Residues 365 to 390 (YGDGLQSVFPLIAKGQRSATSQAVYQ) lie on the Extracellular side of the membrane. A helical transmembrane segment spans residues 391–411 (LFGMFVTLVFASVGGSLGGLL). The Cytoplasmic segment spans residues 412-455 (LRLPFLDSPPDSQCFEDQVYWEVPGEQETETQRPLRGGESDTRA). The segment at 413–421 (RLPFLDSPP) is interaction with ANK3. Residues 434–455 (VPGEQETETQRPLRGGESDTRA) form a disordered region. The span at 441–455 (ETQRPLRGGESDTRA) shows a compositional bias: basic and acidic residues.

It belongs to the ammonium transporter (TC 2.A.49) family. Rh subfamily. In terms of assembly, interacts (via C-terminus) with ANK2 and ANK3; required for targeting to the basolateral membrane. In terms of processing, N-glycosylated. Expressed in kidney by connecting segments and collecting tubules. Also expressed in liver by perivenous hepatocytes. Expressed in the forestomach and the fundus of the stomach. Expressed in duodenum, jejunum, ileum and colon at the level of villous (at protein level). Specifically expressed in kidney where it is restricted to the epithelial linings of the convoluted tubules and the loop of Henle. Also detected in ovary. Expressed by hepatocytes and dermal hair follicles and papillae.

It localises to the cell membrane. It is found in the basolateral cell membrane. It catalyses the reaction NH4(+)(in) = NH4(+)(out). The catalysed reaction is methylamine(out) = methylamine(in). The enzyme catalyses CO2(out) = CO2(in). Its activity is regulated as follows. Inhibited by amiloride. Functionally, ammonium transporter involved in the maintenance of acid-base homeostasis. Transports ammonium and its related derivative methylammonium across the basolateral plasma membrane of epithelial cells likely contributing to renal transepithelial ammonia transport and ammonia metabolism. May transport either NH4(+) or NH3 ammonia species predominantly mediating an electrogenic NH4(+) transport. May act as a CO2 channel providing for renal acid secretion. This chain is Ammonium transporter Rh type B (Rhbg), found in Mus musculus (Mouse).